The primary structure comprises 316 residues: MGILKDGNHTAVTEFILLGLTDDPVLKVVLFTIILCIYLVTVSGNLSTILLIRVSSQLHHPMYFFLSHLASVDIGISSSVTPNMLVNFLLERSTISYLGCGIQLGSGAFFGSTESFLLAAMAYDHFMAICNPLLYSTKMSTQVCIQLLVGSYIGGFLNASSFILSFFSFLFCGPNKVNHFFCDFTPLVELSCSDNSVLLILDSFSAGSIIVITVLVIAISYTYILITILKMHSTEGRHKAFSTCTSHLTAVTVFYGTVTFIYVMPKSSYSTDQNKVLSVFYMIAIAIPMLNPLIYSLRNNEIKNALKRQLSKKTFS.

At methionine 1–valine 28 the chain is on the extracellular side. N-linked (GlcNAc...) asparagine glycosylation occurs at asparagine 8. The chain crosses the membrane as a helical span at residues valine 29 to isoleucine 49. Residues leucine 50–glutamine 57 lie on the Cytoplasmic side of the membrane. Residues leucine 58 to serine 78 form a helical membrane-spanning segment. The Extracellular portion of the chain corresponds to serine 79–isoleucine 102. Cysteines 100 and 192 form a disulfide. Residues glutamine 103–tyrosine 123 form a helical membrane-spanning segment. The Cytoplasmic portion of the chain corresponds to aspartate 124–serine 136. A helical transmembrane segment spans residues threonine 137–leucine 157. The Extracellular segment spans residues asparagine 158–leucine 199. Residues isoleucine 200 to serine 220 form a helical membrane-spanning segment. The Cytoplasmic segment spans residues tyrosine 221–alanine 240. A helical membrane pass occupies residues phenylalanine 241–isoleucine 261. Residues tyrosine 262 to asparagine 274 lie on the Extracellular side of the membrane. A helical membrane pass occupies residues lysine 275–leucine 297. The Cytoplasmic portion of the chain corresponds to arginine 298–serine 316.

Belongs to the G-protein coupled receptor 1 family.

It is found in the cell membrane. In terms of biological role, potential odorant receptor. In Mus musculus (Mouse), this protein is Olfactory receptor 5P79.